Consider the following 415-residue polypeptide: Putative O-antigen transporter (415 aa).

The Cytoplasmic segment spans residues 1 to 11 (MNTNKLSLRRN). Residues 12 to 32 (VIYLAVVQGSNYLLPLLTFPY) form a helical membrane-spanning segment. Topologically, residues 33-41 (LVRTLGPEN) are periplasmic. Residues 42–62 (FGIFGFCQATMLYMIMFVEYG) form a helical membrane-spanning segment. At 63–83 (FNLTATQSIAKAADSKDKVTS) the chain is on the cytoplasmic side. A helical membrane pass occupies residues 84 to 104 (IFWAVIFSKIVLIVITLIFLT). Residues 105–117 (SMTLLVPEYNKHA) are Periplasmic-facing. A helical membrane pass occupies residues 118–138 (VIIWSFVPALVGNLIYPIWLF). The Cytoplasmic portion of the chain corresponds to 139-173 (QGKEKMKWLTLSSILSRLAIIPLTFIFVNTKSDIA). A helical transmembrane segment spans residues 174–194 (IAGFIQSSANLVAGIIALAIV). The Periplasmic segment spans residues 195 to 220 (VHEGWIGKVTLSLHNVRRSLADGFHV). A helical membrane pass occupies residues 221–241 (FISTSAISLYSTGIVIILGFI). Topologically, residues 242 to 295 (SGPTSVGNFNAANTIRNALQGLLNPITQAIYPRISSTLVLNRVKGVILIKKSLT) are cytoplasmic. A helical membrane pass occupies residues 296–316 (CLSLIGGAFSLILLLGASILV). At 317–328 (KISIGPGYDNAV) the chain is on the periplasmic side. Residues 329–349 (IVLMIISPLPFLISLSNVYGI) form a helical membrane-spanning segment. The Cytoplasmic portion of the chain corresponds to 350–362 (QVMLTHNYKKEFS). The helical transmembrane segment at 363 to 383 (KILIAAGLLSLLLIFPLTTLF) threads the bilayer. At 384–385 (KE) the chain is on the periplasmic side. The chain crosses the membrane as a helical span at residues 386–406 (IGAAITLLATECLVTSLMLMF). Residues 407-415 (VRNNKLLVC) are Cytoplasmic-facing.

The protein belongs to the polysaccharide synthase family.

It localises to the cell inner membrane. Its pathway is bacterial outer membrane biogenesis; LPS O-antigen biosynthesis. Its function is as follows. May be involved in the translocation process of the nascent O-polysaccharide molecules and/or its ligation to lipid A core units. The sequence is that of Putative O-antigen transporter (rfbX) from Escherichia coli (strain K12).